Reading from the N-terminus, the 585-residue chain is Bifunctional lycopene cyclase/phytoene synthase (585 aa).

The tract at residues 1 to 243 (MGFDYAIVHV…IVFGQLAFDN (243 aa)) is lycopene beta-cyclase. 7 consecutive transmembrane segments (helical) span residues 3 to 23 (FDYAIVHVKYTIPPAVLLTLL), 35 to 55 (KVLFLVTVAVTATIPWDSYLI), 75 to 97 (IPLEEVFFFFIQTYNTTLLYLIL), 123 to 141 (LAGQLFLVGATVWAGLRVH), 151 to 171 (LIVVWAAPIILLQWTLAYQFI), 173 to 193 (GLPWTNTVLPIAIPTLYLWLV), and 221 to 241 (IEEALFFFVTNTLIVFGQLAF). Residues 250–585 (TFPALFPKPP…AWRTLNKSIA (336 aa)) form a phytoene synthase region.

This sequence in the N-terminal section; belongs to the lycopene beta-cyclase family. It in the C-terminal section; belongs to the phytoene/squalene synthase family.

It is found in the membrane. The catalysed reaction is all-trans-lycopene = gamma-carotene. It carries out the reaction gamma-carotene = all-trans-beta-carotene. The enzyme catalyses 2 (2E,6E,10E)-geranylgeranyl diphosphate = 15-cis-phytoene + 2 diphosphate. Its pathway is carotenoid biosynthesis; beta-carotene biosynthesis. It functions in the pathway carotenoid biosynthesis; phytoene biosynthesis; all-trans-phytoene from geranylgeranyl diphosphate: step 1/1. In terms of biological role, bifunctional enzyme that catalyzes the reactions from geranylgeranyl diphosphate to phytoene (phytoene synthase) and lycopene to beta-carotene via the intermediate gamma-carotene (lycopene cyclase). This Phaeosphaeria nodorum (strain SN15 / ATCC MYA-4574 / FGSC 10173) (Glume blotch fungus) protein is Bifunctional lycopene cyclase/phytoene synthase.